The chain runs to 303 residues: Large ribosomal subunit protein uL18 (303 aa).

It belongs to the universal ribosomal protein uL18 family. As to quaternary structure, component of the large ribosomal subunit (LSU).

The protein resides in the cytoplasm. It is found in the nucleus. Functionally, component of the ribosome, a large ribonucleoprotein complex responsible for the synthesis of proteins in the cell. The small ribosomal subunit (SSU) binds messenger RNAs (mRNAs) and translates the encoded message by selecting cognate aminoacyl-transfer RNA (tRNA) molecules. The large subunit (LSU) contains the ribosomal catalytic site termed the peptidyl transferase center (PTC), which catalyzes the formation of peptide bonds, thereby polymerizing the amino acids delivered by tRNAs into a polypeptide chain. The nascent polypeptides leave the ribosome through a tunnel in the LSU and interact with protein factors that function in enzymatic processing, targeting, and the membrane insertion of nascent chains at the exit of the ribosomal tunnel. This Oikopleura dioica (Tunicate) protein is Large ribosomal subunit protein uL18 (RPL5).